The chain runs to 351 residues: Phenoloxidase-activating factor 3 (351 aa).

A signal peptide spans 1-19 (MWLSLVILGVASAIVNVST). An N-linked (GlcNAc...) asparagine glycan is attached at N16. The 52-residue stretch at 22–73 (SCTTPNGETATCLPIESCKIFWDYVVTSGADPEINSFLRASLCRQGNYVVCC) folds into the Clip domain. Disulfide bonds link C23–C72, C33–C64, C39–C73, C89–C224, C127–C143, C167–C176, C268–C285, and C295–C326. Positions 97–350 (VLGGEDTDLG…HLDWIKQNVR (254 aa)) constitute a Peptidase S1 domain. Catalysis depends on H142, which acts as the Charge relay system. Ca(2+) is bound by residues E158, D160, A163, and D166. D204 serves as the catalytic Charge relay system. S299 (charge relay system) is an active-site residue.

The protein belongs to the peptidase S1 family. CLIP subfamily. As to quaternary structure, in the active form, heterodimer of a light chain and a heavy chain; disulfide-linked. Post-translationally, proteolytically cleaved.

It localises to the secreted. Its activity is regulated as follows. Cleavage of PPAF2 is Ca(2+)-independent. Inhibited by heparin. Its function is as follows. Serine endopeptidase which, by cleaving prophenoloxidase activating factor PPAF2, is required for the activation of the prophenoloxidase cascade probably following the recognition of pathogen-derived products. The chain is Phenoloxidase-activating factor 3 from Holotrichia diomphalia (Korean black chafer).